The chain runs to 1357 residues: Major yolk protein (1357 aa).

The first 15 residues, 1–15 (MRAAILFCLVASSMA), serve as a signal peptide directing secretion. 2 consecutive Transferrin-like domains span residues 132 to 478 (VRWC…GEVY) and 493 to 1101 (AKIC…AIVK). Residues Asn-198, Asn-227, Asn-304, Asn-310, Asn-402, Asn-499, Asn-530, Asn-541, Asn-572, Asn-578, Asn-625, Asn-639, Asn-692, Asn-732, Asn-741, Asn-1035, Asn-1043, Asn-1081, Asn-1128, Asn-1208, Asn-1241, and Asn-1258 are each glycosylated (N-linked (GlcNAc...) asparagine).

This sequence belongs to the transferrin family. Synthesized in the intestines of the females and males and also in ovaries and testis.

Its subcellular location is the secreted. In terms of biological role, may serve the following two functions: a classical role as a yolk protein precursor and probably shuttle iron to developing germ cells. The protein is Major yolk protein of Strongylocentrotus purpuratus (Purple sea urchin).